The following is a 169-amino-acid chain: Putative ribonuclease VapC50 (169 aa).

Toxic component of a type II toxin-antitoxin (TA) system. An RNase. The cognate antitoxin is VapB50. This Mycobacterium tuberculosis (strain ATCC 25618 / H37Rv) protein is Putative ribonuclease VapC50.